The following is a 391-amino-acid chain: Aminoacetone oxidase (391 aa).

Positions 14, 33, 134, 362, 374, and 375 each coordinate FAD.

Belongs to the BaiN/RdsA family. As to quaternary structure, monomer. Requires FAD as cofactor.

Its function is as follows. Flavoprotein that probably catalyzes the condensation of two molecules of aminoacetone to yield 3,6-dimethyl-2,5-dihydropyrazine, which is subsequently oxidized to 2,5-dimethylpyrazine. It could be involved in a microbial defense mechanism related to aminoacetone catabolism through a pathway yielding dimethylpyrazine derivatives instead of methylglyoxal. It has also low aminoacetone oxidase activity, and can produce hydrogen peroxide from aminoacetone. In addition, it shows very low L-amino acid oxidase activity, and can produce hydrogen peroxide from peptone and from seven amino acids, L-aspartate, L-tryptophan, L-lysine, L-isoleucine, L-arginine, L-asparagine and L-glutamine. It cannot use L-malate, oxaloacetate or alpha-aminobutyrate. Plays a role in antioxidant defense. The chain is Aminoacetone oxidase from Streptococcus cristatus.